The chain runs to 247 residues: DNA polymerase sliding clamp (247 aa).

This sequence belongs to the PCNA family. As to quaternary structure, homotrimer. The subunits circularize to form a toroid; DNA passes through its center. Replication factor C (RFC) is required to load the toroid on the DNA.

Sliding clamp subunit that acts as a moving platform for DNA processing. Responsible for tethering the catalytic subunit of DNA polymerase and other proteins to DNA during high-speed replication. In Methanocorpusculum labreanum (strain ATCC 43576 / DSM 4855 / Z), this protein is DNA polymerase sliding clamp.